The primary structure comprises 139 residues: Cystatin (139 aa).

An N-terminal signal peptide occupies residues 1-23; sequence MAGARGCVVLLAAALMLVGAVLG. Positions 76–80 match the Secondary area of contact motif; it reads QLVSG. Intrachain disulfides connect Cys94–Cys104 and Cys118–Cys138. At Ser103 the chain carries Phosphoserine.

Belongs to the cystatin family.

Its subcellular location is the secreted. In terms of biological role, this protein binds tightly to and inhibits a variety of thiol proteases including ficin, papain, and cathepsins B, C, H, and L. Although isolated from egg white, it is also present in serum. This Gallus gallus (Chicken) protein is Cystatin.